Reading from the N-terminus, the 1030-residue chain is MKSLYTPTDYYMIRVPLVHQDLKNENSQDIDQLLHDLCNDSLFREQILVSSRTLYETIHTFLQAPDKLKGKKKRNFQQAILKYATRRATRTTPFGLFSSVGIGSFSDKNHLSFNQHSFYKKARVDLEWLYQLIRKLENEYTDRLSFTLNSACYIKGDRAYLLYSTDGKSEEVSVRATSVFYLINELCGESAAYQDIIRCLIDNYPNTPINKINQYVADLIDKEFLISNLRPPMTVSDQFQYLIDQAESRHIPNELIQACKDIQYQIDAYNRITIGEGEHQYLNLIETMNKLIKASSPLQVDAGLADSSIQLDNETSLAISELASMFTYMASPSANTLDHLEKYHNVFLERYGYEREVPLLEMLCSSTGIGAPATYTNPANEFFEETSFGEQFSPEMKQFFMRKYFESVRKKAPIQLDDETFHRICNSEIADEEIPLSFELNFFVKLRNGRVKLYLGPNVGSTRAGKTFGRFSHMSDSISEIIKTLHNKEKELTECNTKVCELSIVPNQTRSGNVTRNVSYREKEMSLFTNSALHLNDSVKAEDILIGINKDHNFYARHKTTGEILSFESNHMFNPLLMTNAVRFLLEISRDGKRKWNDFPWFSIYSDFKYIPEIKYKEITLSCEQWLIYKNDLSMHSNASLEEIKSPFFEFHRTYELPQTFYIVNADNRLLIDIENDCTLDVFFWELKKTNHNQPLQLVAVEHDADALMDRNQNDYSGEIVVPLLRKQPEKPLYLPVLNAIEGSGSDRIKMPFEDWLFIKLYCKQTREEELIAFEIADFYNQISDQYPVRHFFMRYRDPKPHIRLRFNGKAEVLYSLFPQLLNWLKSLREKGLVSESVITQYEREIERYGGLSLMEAAEQLFCEDSKVVEMMIRMHRMKDITISKEIAGMVSVIQFLEQFELTFEEQLTFLERNSLQNEYRTEFKKDREMYIEICNSDRDWDNLKKTSDGGMLYETLKTRKMAAAHYAFLIKKAFDNKDEVYSRIGSIIHLHCNRLFGTDRELENKILTLCRHSLYAQRYQKMNGSLAWK.

The protein to S.epidermidis EpiB and L.lactis NisB.

The protein resides in the cell membrane. In terms of biological role, involved in the post-translational modification of the lantibiotic subtilin. This Bacillus subtilis protein is Subtilin biosynthesis protein SpaB (spaB).